The primary structure comprises 440 residues: Xaa-Pro dipeptidase (440 aa).

5 residues coordinate Mn(2+): aspartate 244, aspartate 255, histidine 335, glutamate 380, and glutamate 419.

This sequence belongs to the peptidase M24B family. Bacterial-type prolidase subfamily. It depends on Mn(2+) as a cofactor.

The catalysed reaction is Xaa-L-Pro dipeptide + H2O = an L-alpha-amino acid + L-proline. Splits dipeptides with a prolyl residue in the C-terminal position. In Shewanella putrefaciens (strain CN-32 / ATCC BAA-453), this protein is Xaa-Pro dipeptidase.